Consider the following 275-residue polypeptide: Translation initiation factor 2 subunit alpha (275 aa).

Positions 12 to 83 constitute an S1 motif domain; sequence GEFVVATVKR…RKGHIDLSLR (72 aa).

This sequence belongs to the eIF-2-alpha family. Heterotrimer composed of an alpha, a beta and a gamma chain.

EIF-2 functions in the early steps of protein synthesis by forming a ternary complex with GTP and initiator tRNA. The polypeptide is Translation initiation factor 2 subunit alpha (eif2a) (Pyrococcus abyssi (strain GE5 / Orsay)).